We begin with the raw amino-acid sequence, 951 residues long: Pentatricopeptide repeat-containing protein At4g19220, mitochondrial (951 aa).

The transit peptide at 1 to 63 (MLLVMVRSST…RHFTSSVLSP (63 aa)) directs the protein to the mitochondrion. PPR repeat units lie at residues 121 to 151 (DLAT…LKEK), 152 to 186 (DVIV…GNEF), 187 to 221 (DSTT…GLVG), 222 to 252 (DSSL…MEHR), 253 to 287 (DIVS…GQEA), 288 to 322 (DTVT…GYSP), 325 to 355 (HVSV…LVCR), 356 to 386 (DVIS…MQSV), 392 to 426 (DIAT…EMQS), 428 to 458 (ALEV…TTHR), 459 to 489 (DLVS…VVSE), 496 to 530 (SLST…GFGD), 531 to 561 (NMLS…MSET), 563 to 597 (DLTS…GKIR), 599 to 629 (DLIT…AIKS), 634 to 668 (DTQL…NLCS), 669 to 695 (WNCV…LKLE), 697 to 731 (NEIT…GFQA), 732 to 762 (NPFV…SGVN), 763 to 793 (SISA…LSSN), 799 to 829 (NKSS…MEEK), and 835 to 865 (VTEH…IGEP). Positions 870-945 (VWGALLSACN…LPGYSVIDVR (76 aa)) are type E motif.

The protein belongs to the PPR family. PCMP-E subfamily.

The protein localises to the mitochondrion. The sequence is that of Pentatricopeptide repeat-containing protein At4g19220, mitochondrial (PCMP-E2) from Arabidopsis thaliana (Mouse-ear cress).